Here is a 951-residue protein sequence, read N- to C-terminus: Bifunctional glutamine synthetase adenylyltransferase/adenylyl-removing enzyme (951 aa).

Residues 1 to 440 (MLPLPSELQI…VFDDLIGDET (440 aa)) form an adenylyl removase region. Residues 449 to 951 (HGLYKSLWQD…WLAANDANVS (503 aa)) form an adenylyl transferase region.

The protein belongs to the GlnE family. Mg(2+) serves as cofactor.

It catalyses the reaction [glutamine synthetase]-O(4)-(5'-adenylyl)-L-tyrosine + phosphate = [glutamine synthetase]-L-tyrosine + ADP. The enzyme catalyses [glutamine synthetase]-L-tyrosine + ATP = [glutamine synthetase]-O(4)-(5'-adenylyl)-L-tyrosine + diphosphate. Functionally, involved in the regulation of glutamine synthetase GlnA, a key enzyme in the process to assimilate ammonia. When cellular nitrogen levels are high, the C-terminal adenylyl transferase (AT) inactivates GlnA by covalent transfer of an adenylyl group from ATP to specific tyrosine residue of GlnA, thus reducing its activity. Conversely, when nitrogen levels are low, the N-terminal adenylyl removase (AR) activates GlnA by removing the adenylyl group by phosphorolysis, increasing its activity. The regulatory region of GlnE binds the signal transduction protein PII (GlnB) which indicates the nitrogen status of the cell. The protein is Bifunctional glutamine synthetase adenylyltransferase/adenylyl-removing enzyme of Yersinia pseudotuberculosis serotype O:1b (strain IP 31758).